A 400-amino-acid chain; its full sequence is Mu-type opioid receptor (400 aa).

Topologically, residues 1-68 (MDSSAVPANA…CPPTGSPSMI (68 aa)) are extracellular. Asparagine 9, asparagine 12, asparagine 33, asparagine 40, and asparagine 48 each carry an N-linked (GlcNAc...) asparagine glycan. Residues 69 to 93 (TAITIMALYSIVCVVGLFGNFLVMY) form a helical membrane-spanning segment. Topologically, residues 94-106 (VIVRYTKMKTATN) are cytoplasmic. Residues 107–131 (IYIFNLALADALATSTLPFQSVNYL) traverse the membrane as a helical segment. The Extracellular segment spans residues 132 to 142 (MGTWPFGTILC). The cysteines at positions 142 and 219 are disulfide-linked. Residues 143-165 (KIVISIDYYNMFTSIFTLCTMSV) form a helical membrane-spanning segment. At 166 to 185 (DRYIAVCHPVKALDFRTPRN) the chain is on the cytoplasmic side. A Phosphotyrosine modification is found at tyrosine 168. The chain crosses the membrane as a helical span at residues 186–207 (AKIVNVCNWIISSAIGLPVMFM). Residues 208–230 (ATTKYRQGSIDCTLTFSHPTWYW) lie on the Extracellular side of the membrane. The helical transmembrane segment at 231–255 (ENLLKICVFIFAFIMPVLIITVCYG) threads the bilayer. Residues 256-279 (LMILRLKSVRMLSGSKEKDRNLRR) are Cytoplasmic-facing. A helical membrane pass occupies residues 280–306 (ITRMVLVVVAVFIVCWTPIHIYVIIKA). Residues 307 to 314 (LVTIPETT) are Extracellular-facing. Residues 315 to 338 (FQTVSWHFCIALGYTNSCLNPVLY) traverse the membrane as a helical segment. Positions 334-338 (NPVLY) match the NPxxY; plays a role in stabilizing the activated conformation of the receptor motif. At 339–400 (AFLDENFKRC…NLEAETAPLP (62 aa)) the chain is on the cytoplasmic side. The S-palmitoyl cysteine moiety is linked to residue cysteine 353. The residue at position 365 (serine 365) is a Phosphoserine. Threonine 372 carries the phosphothreonine modification. Serine 377 is modified (phosphoserine). Phosphothreonine is present on threonine 396.

This sequence belongs to the G-protein coupled receptor 1 family. In terms of assembly, forms homooligomers and heterooligomers with other GPCRs, such as OPRD1, OPRK1, OPRL1, NPFFR2, ADRA2A, SSTR2, CNR1 and CCR5 (probably in dimeric forms). Interacts with heterotrimeric G proteins; interaction with a heterotrimeric complex containing GNAI1, GNB1 and GNG2 stabilizes the active conformation of the receptor and increases its affinity for endomorphin-2, the synthetic opioid peptide DAMGO and for morphinan agonists. Interacts with PPL; the interaction disrupts agonist-mediated G-protein activation. Interacts (via C-terminus) with DNAJB4 (via C-terminus). Interacts with calmodulin; the interaction inhibits the constitutive activity of OPRM1; it abolishes basal and attenuates agonist-stimulated G-protein coupling. Interacts with FLNA, PLD2, RANBP9 and WLS and GPM6A. Interacts with RTP4. Interacts with SYP and GNAS. Interacts with RGS9, RGS17, RGS20, RGS4, PPP1R9B and HINT1. In terms of processing, phosphorylated. Differentially phosphorylated in basal and agonist-induced conditions. Agonist-mediated phosphorylation modulates receptor internalization. Phosphorylated by GRK2 in a agonist-dependent manner. Phosphorylation at Tyr-168 requires receptor activation, is dependent on non-receptor protein tyrosine kinase Src and results in a decrease in agonist efficacy by reducing G-protein coupling efficiency. Phosphorylated on tyrosine residues; the phosphorylation is involved in agonist-induced G-protein-independent receptor down-regulation. Phosphorylation at Ser-377 is involved in G-protein-dependent but not beta-arrestin-dependent activation of the ERK pathway. Post-translationally, ubiquitinated. A basal ubiquitination seems not to be related to degradation. Ubiquitination is increased upon formation of OPRM1:OPRD1 oligomers leading to proteasomal degradation; the ubiquitination is diminished by RTP4.

Its subcellular location is the cell membrane. It is found in the cell projection. The protein localises to the axon. It localises to the perikaryon. The protein resides in the dendrite. Its subcellular location is the endosome. In terms of biological role, receptor for endogenous opioids such as beta-endorphin and endomorphin. Receptor for natural and synthetic opioids including morphine, heroin, DAMGO, fentanyl, etorphine, buprenorphin and methadone. Also activated by enkephalin peptides, such as Met-enkephalin or Met-enkephalin-Arg-Phe, with higher affinity for Met-enkephalin-Arg-Phe. Agonist binding to the receptor induces coupling to an inactive GDP-bound heterotrimeric G-protein complex and subsequent exchange of GDP for GTP in the G-protein alpha subunit leading to dissociation of the G-protein complex with the free GTP-bound G-protein alpha and the G-protein beta-gamma dimer activating downstream cellular effectors. The agonist- and cell type-specific activity is predominantly coupled to pertussis toxin-sensitive G(i) and G(o) G alpha proteins, GNAI1, GNAI2, GNAI3 and GNAO1, and to a lesser extent to pertussis toxin-insensitive G alpha proteins GNAZ and GNA15. They mediate an array of downstream cellular responses, including inhibition of adenylate cyclase activity and both N-type and L-type calcium channels, activation of inward rectifying potassium channels, mitogen-activated protein kinase (MAPK), phospholipase C (PLC), phosphoinositide/protein kinase (PKC), phosphoinositide 3-kinase (PI3K) and regulation of NF-kappa-B. Also couples to adenylate cyclase stimulatory G alpha proteins. The selective temporal coupling to G-proteins and subsequent signaling can be regulated by RGSZ proteins, such as RGS9, RGS17 and RGS4. Phosphorylation by members of the GPRK subfamily of Ser/Thr protein kinases and association with beta-arrestins is involved in short-term receptor desensitization. Beta-arrestins associate with the GPRK-phosphorylated receptor and uncouple it from the G-protein thus terminating signal transduction. The phosphorylated receptor is internalized through endocytosis via clathrin-coated pits which involves beta-arrestins. The activation of the ERK pathway occurs either in a G-protein-dependent or a beta-arrestin-dependent manner and is regulated by agonist-specific receptor phosphorylation. Acts as a class A G-protein coupled receptor (GPCR) which dissociates from beta-arrestin at or near the plasma membrane and undergoes rapid recycling. Receptor down-regulation pathways are varying with the agonist and occur dependent or independent of G-protein coupling. Endogenous ligands induce rapid desensitization, endocytosis and recycling. Heterooligomerization with other GPCRs can modulate agonist binding, signaling and trafficking properties. Involved in neurogenesis. The polypeptide is Mu-type opioid receptor (OPRM1) (Saimiri boliviensis boliviensis (Bolivian squirrel monkey)).